The chain runs to 546 residues: MTVTVEPSITTGPIAGSSKAYREVAGPDGVTLRVPLRRVHLSTGADFDLYDTSGPYTDPNAVIDLAVGLPARPGLVRDRGTQLQRARAGEITAEMAFIAAREGMSAELVRDEVALGRAVIPANHNHPESEPMVIGKAFAVKVNANIGNSAVTSSIAEEVDKMVWATRWGADTIMDLSTGKNIHETREWILRNSPVPVGTVPIYQALEKVKGDPTELTWELYRDTVIEQCEQGVDYMTVHAGVLLRYVPLTAKRVTGIVSRGGSIMAAWCLAHHRESFLYTNFEELCDILARYDVTFSLGDGLRPGSIADANDAAQFAELRTLGELTKIAKAHGVQVMIEGPGHVPMHKIVENVRLEEELCEEAPFYTLGPLATDIAPAYDHITSAIGAAIIAQAGTAMLCYVTPKEHLGLPDRKDVKDGVIAYKIAAHAGDLAKGHPHAQERDNALSQARFEFRWNDQFALSLDPDTAREYHDETLPAEPAKTAHFCSMCGPKFCSMRITRDVRDYAAKHGLDSEEAIEAALEAGMAEKSAEFADHGNRVYLPITQ.

Substrate is bound by residues Asn-145, Met-174, Tyr-203, His-239, 259 to 261, 300 to 303, and Glu-339; these read SRG and DGLR. His-343 is a binding site for Zn(2+). Residue Tyr-366 participates in substrate binding. His-407 contributes to the Zn(2+) binding site. Residues Cys-487, Cys-490, and Cys-495 each contribute to the [4Fe-4S] cluster site.

This sequence belongs to the ThiC family. Requires [4Fe-4S] cluster as cofactor.

The catalysed reaction is 5-amino-1-(5-phospho-beta-D-ribosyl)imidazole + S-adenosyl-L-methionine = 4-amino-2-methyl-5-(phosphooxymethyl)pyrimidine + CO + 5'-deoxyadenosine + formate + L-methionine + 3 H(+). It participates in cofactor biosynthesis; thiamine diphosphate biosynthesis. Functionally, catalyzes the synthesis of the hydroxymethylpyrimidine phosphate (HMP-P) moiety of thiamine from aminoimidazole ribotide (AIR) in a radical S-adenosyl-L-methionine (SAM)-dependent reaction. The protein is Phosphomethylpyrimidine synthase of Mycobacterium ulcerans (strain Agy99).